A 151-amino-acid polypeptide reads, in one-letter code: Large ribosomal subunit protein bL9 (151 aa).

It belongs to the bacterial ribosomal protein bL9 family.

Its function is as follows. Binds to the 23S rRNA. The sequence is that of Large ribosomal subunit protein bL9 from Mycolicibacterium vanbaalenii (strain DSM 7251 / JCM 13017 / BCRC 16820 / KCTC 9966 / NRRL B-24157 / PYR-1) (Mycobacterium vanbaalenii).